Here is a 449-residue protein sequence, read N- to C-terminus: Cysteine--tRNA ligase (449 aa).

Residue cysteine 29 participates in Zn(2+) binding. The short motif at 31–41 is the 'HIGH' region element; the sequence is PTVYDHLHIGN. Residues cysteine 211, histidine 236, and glutamate 240 each contribute to the Zn(2+) site. Residues 269–273 carry the 'KMSKS' region motif; it reads KMSKS. Position 272 (lysine 272) interacts with ATP.

It belongs to the class-I aminoacyl-tRNA synthetase family. In terms of assembly, monomer. The cofactor is Zn(2+).

The protein localises to the cytoplasm. The catalysed reaction is tRNA(Cys) + L-cysteine + ATP = L-cysteinyl-tRNA(Cys) + AMP + diphosphate. The protein is Cysteine--tRNA ligase of Methylocella silvestris (strain DSM 15510 / CIP 108128 / LMG 27833 / NCIMB 13906 / BL2).